We begin with the raw amino-acid sequence, 176 residues long: NAD(P)H-quinone oxidoreductase subunit 6, chloroplastic (176 aa).

Helical transmembrane passes span 10–30 (FLLV…VLLP), 32–52 (PIYS…FYIL), 61–81 (AQLL…VMFM), 92–112 (LWTV…ISLI), and 152–172 (FFLP…GAIA).

It belongs to the complex I subunit 6 family. NDH is composed of at least 16 different subunits, 5 of which are encoded in the nucleus.

The protein localises to the plastid. It is found in the chloroplast thylakoid membrane. The catalysed reaction is a plastoquinone + NADH + (n+1) H(+)(in) = a plastoquinol + NAD(+) + n H(+)(out). It catalyses the reaction a plastoquinone + NADPH + (n+1) H(+)(in) = a plastoquinol + NADP(+) + n H(+)(out). NDH shuttles electrons from NAD(P)H:plastoquinone, via FMN and iron-sulfur (Fe-S) centers, to quinones in the photosynthetic chain and possibly in a chloroplast respiratory chain. The immediate electron acceptor for the enzyme in this species is believed to be plastoquinone. Couples the redox reaction to proton translocation, and thus conserves the redox energy in a proton gradient. The protein is NAD(P)H-quinone oxidoreductase subunit 6, chloroplastic (ndhG) of Atropa belladonna (Belladonna).